A 251-amino-acid chain; its full sequence is Large ribosomal subunit protein uL16m (251 aa).

A mitochondrion-targeting transit peptide spans 1 to 29 (MWRLLTRVPAPLLRMHFSDSWAALPTSAG).

This sequence belongs to the universal ribosomal protein uL16 family. In terms of assembly, component of the mitochondrial ribosome large subunit (39S) which comprises a 16S rRNA and about 50 distinct proteins.

It localises to the mitochondrion. The protein is Large ribosomal subunit protein uL16m (Mrpl16) of Mus musculus (Mouse).